Here is a 109-residue protein sequence, read N- to C-terminus: UPF0060 membrane protein PSPA7_1846 (109 aa).

4 helical membrane-spanning segments follow: residues 5–25 (LWFV…YLWL), 27–47 (LGKS…FALL), 59–79 (AYAA…AFVE), and 84–104 (LWSD…VLFG).

Belongs to the UPF0060 family.

The protein localises to the cell inner membrane. The chain is UPF0060 membrane protein PSPA7_1846 from Pseudomonas paraeruginosa (strain DSM 24068 / PA7) (Pseudomonas aeruginosa (strain PA7)).